Consider the following 587-residue polypeptide: Methylcrotonoyl-CoA carboxylase beta chain, mitochondrial (587 aa).

Residues methionine 1 to proline 26 constitute a mitochondrion transit peptide. Residues methionine 68 to phenylalanine 324 form the CoA carboxyltransferase N-terminal domain. The interval methionine 68–aspartate 579 is carboxyltransferase. Positions glutamate 333–aspartate 579 constitute a CoA carboxyltransferase C-terminal domain. The tract at residues glutamate 367–asparagine 396 is acyl-CoA binding.

This sequence belongs to the AccD/PCCB family. In terms of assembly, probably a heterodimer composed of biotin-containing alpha subunits and beta subunits. As to expression, in roots, cotyledons, leaves, flowers, ovaries, siliques and embryos.

The protein resides in the mitochondrion matrix. The enzyme catalyses 3-methylbut-2-enoyl-CoA + hydrogencarbonate + ATP = 3-methyl-(2E)-glutaconyl-CoA + ADP + phosphate + H(+). It participates in amino-acid degradation; L-leucine degradation; (S)-3-hydroxy-3-methylglutaryl-CoA from 3-isovaleryl-CoA: step 2/3. Carboxyltransferase subunit of the 3-methylcrotonyl-CoA carboxylase, an enzyme that catalyzes the conversion of 3-methylcrotonyl-CoA to 3-methylglutaconyl-CoA, a critical step for leucine and isovaleric acid catabolism. This chain is Methylcrotonoyl-CoA carboxylase beta chain, mitochondrial (MCCB), found in Arabidopsis thaliana (Mouse-ear cress).